Consider the following 963-residue polypeptide: Iron-responsive element-binding protein 2 (963 aa).

Residues cysteine 512, cysteine 578, and cysteine 581 each coordinate [4Fe-4S] cluster.

The protein belongs to the aconitase/IPM isomerase family. Interacts with RBCK1 only in iron-rich conditions. Interacts (when associated with the 4Fe-4S) with FBXL5. Interacts with CIAO1 and CIAO2A. [4Fe-4S] cluster is required as a cofactor. Post-translationally, ubiquitinated and degraded by the proteasome in presence of high level of iron and oxygen. Ubiquitinated by a SCF complex containing FBXL5. Upon iron and oxygen depletion FBXL5 is degraded, preventing ubiquitination and allowing its RNA-binding activity. Ubiquitously expressed in rat tissues, the highest amounts present in skeletal muscle and heart.

The protein localises to the cytoplasm. In terms of biological role, RNA-binding protein that binds to iron-responsive elements (IRES), which are stem-loop structures found in the 5'-UTR of ferritin, and delta aminolevulinic acid synthase mRNAs, and in the 3'-UTR of transferrin receptor mRNA. Binding to the IRE element in ferritin results in the repression of its mRNA translation. Binding of the protein to the transferrin receptor mRNA inhibits the degradation of this otherwise rapidly degraded mRNA. This is Iron-responsive element-binding protein 2 (Ireb2) from Rattus norvegicus (Rat).